The primary structure comprises 393 residues: 5-azacytidine-induced protein 2 (393 aa).

The tract at residues 1 to 198 (MDALVEDDIC…IELQKAKQTD (198 aa)) is homodimerization. Residues 40-198 (ALVTAYEDIK…IELQKAKQTD (159 aa)) are a coiled coil. Residues 217 to 258 (SDNMQSAYWELKREMSNLHLVTQVQAELLRKLKTPAAIKKAC) form an interaction with TBK1 and IKBKE region. Phosphoserine is present on serine 319. Disordered stretches follow at residues 321 to 340 (TDHERSIPHDGTNFQEHNSY) and 345 to 393 (LEDN…HYKH). A Phosphoserine modification is found at serine 354. Positions 384–393 (QHNQNCHYKH) are enriched in polar residues.

Homodimer. Interacts with IKBKE, TBK1 and TICAM1. Interacts with TAX1BP1. Interacts with CALCOCO2. Post-translationally, ubiquitinated via 'Lys-48'-linked polyubiquitination by TRIM38, leading to its degradation.

It is found in the cytoplasm. Functionally, adapter protein which binds TBK1 and IKBKE playing a role in antiviral innate immunity. Activates serine/threonine-protein kinase TBK1 and facilitates its oligomerization. Enhances the phosphorylation of NF-kappa-B p65 subunit RELA by TBK1. Promotes TBK1-induced as well as TNF-alpha or PMA-induced activation of NF-kappa-B. Participates in IFNB promoter activation via TICAM1. This chain is 5-azacytidine-induced protein 2 (AZI2), found in Bos taurus (Bovine).